The chain runs to 342 residues: Metalloendoproteinase 4-MMP (342 aa).

A signal peptide spans 1-34 (MHHHHHPCNRKPFTTIFSFFLLYLNLHNQQIIEA). Residues 35–124 (RNPSQFTTNP…KTAPFHTGKK (90 aa)) constitute a propeptide, activation peptide. Residues 104 to 111 (PRCGFPDD) carry the Cysteine switch motif. Residues Cys106 and His252 each contribute to the Zn(2+) site. Glu253 is an active-site residue. Residues His256 and His262 each contribute to the Zn(2+) site. Residue Asn300 is glycosylated (N-linked (GlcNAc...) asparagine). A lipid anchor (GPI-anchor amidated aspartate) is attached at Asp317. Positions 318-342 (GSRIRSQGMIYSTLSTVIALCFLNW) are cleaved as a propeptide — removed in mature form.

Belongs to the peptidase M10A family. Matrix metalloproteinases (MMPs) subfamily. Zn(2+) is required as a cofactor. As to expression, mostly expressed in flowers and stems, and, to a lower extent, in leaves and roots.

It is found in the cell membrane. Its activity is regulated as follows. Repressed by acetohydroxamic acid (AHA). Functionally, matrix metalloproteinases (MMPs) or matrixins may play a role in the degradation and remodeling of the extracellular matrix (ECM) during development or in response to stresses. Active on myelin basic protein (MBP) and, to some extent, on McaPLGLDpaAR-NH(2) (QF24) and beta-casein. This Arabidopsis thaliana (Mouse-ear cress) protein is Metalloendoproteinase 4-MMP.